The sequence spans 456 residues: Protein king tubby (456 aa).

Residues 111-202 (HELEDEESSP…SNGAGGESEG (92 aa)) form a disordered region. Over residues 120–152 (PVTVIEQQQTAPHSANSTHSQRPSTTRQPSFND) the composition is skewed to polar residues. At Ser-149 the chain carries Phosphoserine.

This sequence belongs to the TUB family.

It localises to the cytoplasm. Its subcellular location is the nucleus. The protein resides in the cell projection. The protein localises to the cilium membrane. It is found in the rhabdomere. The polypeptide is Protein king tubby (Drosophila pseudoobscura pseudoobscura (Fruit fly)).